The following is a 475-amino-acid chain: Protein transport protein Sec61 subunit alpha (475 aa).

The next 10 helical transmembrane spans lie at 33–53 (LWTA…LFGI), 76–96 (LMEL…LLAG), 118–138 (LFGM…GMYG), 145–165 (AGIC…VLLL), 173–193 (YGLG…TIVW), 241–261 (NLMN…FQGF), 289–309 (IPII…QMLA), 354–374 (FLDP…CAFF), 420–440 (AAFG…IGAI), and 441–461 (GSGT…EIFV).

Belongs to the SecY/SEC61-alpha family. The SEC61 channel-forming translocon complex consists of channel-forming core components SEC61A1, SEC61B and SEC61G and different auxiliary components such as SEC62 and SEC63. The SEC61 channel associates with the multi-pass translocon (MPT) complex. In terms of tissue distribution, expressed predominantly in epidermal cells of the embryo.

Its subcellular location is the endoplasmic reticulum membrane. Component of SEC61 channel-forming translocon complex that mediates transport of signal peptide-containing precursor polypeptides across the endoplasmic reticulum (ER). Forms a ribosome receptor and a gated pore in the ER membrane, both functions required for cotranslational translocation of nascent polypeptides. May cooperate with auxiliary protein SEC62, SEC63 and HSPA5/BiP to enable post-translational transport of small presecretory proteins. The SEC61 channel is also involved in ER membrane insertion of transmembrane proteins: it mediates membrane insertion of the first few transmembrane segments of proteins, while insertion of subsequent transmembrane regions of multi-pass membrane proteins is mediated by the multi-pass translocon (MPT) complex. In Halocynthia roretzi (Sea squirt), this protein is Protein transport protein Sec61 subunit alpha.